Here is a 349-residue protein sequence, read N- to C-terminus: Isopentenyl-diphosphate delta-isomerase (349 aa).

Residue 9-10 (RK) coordinates substrate. FMN is bound by residues 65–67 (AMT), Ser95, and Asn124. Residue 95–97 (STH) coordinates substrate. Gln154 is a binding site for substrate. Glu155 contacts Mg(2+). FMN-binding positions include Lys186, Ser211, Thr216, 262 to 264 (GLR), and 283 to 284 (SR).

This sequence belongs to the IPP isomerase type 2 family. In terms of assembly, homooctamer. Dimer of tetramers. It depends on FMN as a cofactor. NADPH is required as a cofactor. Mg(2+) serves as cofactor.

Its subcellular location is the cytoplasm. It catalyses the reaction isopentenyl diphosphate = dimethylallyl diphosphate. In terms of biological role, involved in the biosynthesis of isoprenoids. Catalyzes the 1,3-allylic rearrangement of the homoallylic substrate isopentenyl (IPP) to its allylic isomer, dimethylallyl diphosphate (DMAPP). The protein is Isopentenyl-diphosphate delta-isomerase of Staphylococcus aureus (strain JH1).